Consider the following 352-residue polypeptide: Iron-sulfur cluster carrier protein (352 aa).

114–121 provides a ligand contact to ATP; it reads GKGGVGKS.

This sequence belongs to the Mrp/NBP35 ATP-binding proteins family. In terms of assembly, homodimer. Interacts with BrxC.

Its function is as follows. Binds and transfers iron-sulfur (Fe-S) clusters to target apoproteins. Can hydrolyze ATP. Negatively regulates the expression of hpr/scoC. The effect on hpr/scoC may be indirect. The sequence is that of Iron-sulfur cluster carrier protein (salA) from Bacillus subtilis (strain 168).